Reading from the N-terminus, the 334-residue chain is Cytoskeleton protein RodZ (334 aa).

Topologically, residues 1–111 are cytoplasmic; that stretch reads MNTEATHDQN…LGKRRKKRDG (111 aa). One can recognise an HTH cro/C1-type domain in the interval 19–71; sequence LRNAREQLGLSQQAVAERLCLKVSTVRDIEEDKAPSDLASTFLRGYIRSYARL. The segment at residues 30 to 49 is a DNA-binding region (H-T-H motif); the sequence is QQAVAERLCLKVSTVRDIEE. A helical; Signal-anchor for type II membrane protein membrane pass occupies residues 112-132; that stretch reads WLMSFTWLVLFVVVGLTGAWW. The Periplasmic segment spans residues 133-334; the sequence is WQNHKAQQEE…TLNAEPTPAQ (202 aa). The segment at 155-241 is disordered; that stretch reads NADKDSGQSV…PSALPTSQAG (87 aa). Composition is skewed to low complexity over residues 170–211 and 219–241; these read AATS…TVVA and TAAT…SQAG.

This sequence belongs to the RodZ family.

The protein localises to the cell inner membrane. Cytoskeletal protein that is involved in cell-shape control through regulation of the length of the long axis. In Salmonella agona (strain SL483), this protein is Cytoskeleton protein RodZ.